The following is a 91-amino-acid chain: uncharacterized protein (91 aa).

It belongs to the UPF0440 family.

This is an uncharacterized protein from Methanothermobacter thermautotrophicus (strain ATCC 29096 / DSM 1053 / JCM 10044 / NBRC 100330 / Delta H) (Methanobacterium thermoautotrophicum).